The sequence spans 614 residues: Zinc finger and SCAN domain-containing protein 2 (614 aa).

3 disordered regions span residues 1 to 25 (MAAE…EDEQ), 42 to 73 (AVLQ…EGPQ), and 162 to 200 (NISG…RVVP). The 59-residue stretch at 69–127 (AEGPQGALVRFRELCRRWLRPEVHTKEQMLTVLPREIQAWLQEHRPESSEEAVALVEDL) folds into the SCAN box domain. 14 consecutive C2H2-type zinc fingers follow at residues 222-244 (YECP…ERTH), 250-272 (YKCD…QTTH), 278-300 (YKCR…QRIH), 306-328 (FQCA…QRTH), 334-356 (YSCP…QGIH), 362-384 (YACK…QRIH), 390-412 (YKCT…RRTH), 418-440 (YQCG…RRTH), 446-468 (YKCG…QGTH), 474-496 (YECL…QRTH), 502-524 (YRCG…QRTH), 530-552 (YKCL…QRAH), 558-580 (YRCP…QRIH), and 586-608 (YRCP…QRTH).

It belongs to the krueppel C2H2-type zinc-finger protein family. As to expression, in the adult, predominantly found in spermatids. Also present in the embryo.

Its subcellular location is the nucleus. Functionally, may be involved in transcriptional regulation during the post-meiotic stages of spermatogenesis. This Mus musculus (Mouse) protein is Zinc finger and SCAN domain-containing protein 2 (Zscan2).